The primary structure comprises 274 residues: MSGTKIHPTAFVEEGAQLGENVSIGPFCHIGPQAVIGDGCCLMSHVVIMGNTILGANSKIFPHAILGGDPQNNKHKGGHTSLFIGKNCIIREGVTMHRGSDTCAGKTVIGDNCQFFSYAHVAHDCHVGHHVTFANNAMIGGHVTVGDYVIIGGGSAVHQFVRIGHHAFIGGVSALVGDLIPYGMAVGVQAKLAGLNIIGMKRAGLERKEIRSLRHAVSMLFDHSKPLRERVYDVFSFYSTSQSVVDIVNFIQEKGKRFYCTPRFENDTMCSNKD.

It belongs to the transferase hexapeptide repeat family. LpxA subfamily. In terms of assembly, homotrimer.

Its subcellular location is the cytoplasm. It catalyses the reaction a (3R)-hydroxyacyl-[ACP] + UDP-N-acetyl-alpha-D-glucosamine = a UDP-3-O-[(3R)-3-hydroxyacyl]-N-acetyl-alpha-D-glucosamine + holo-[ACP]. It participates in glycolipid biosynthesis; lipid IV(A) biosynthesis; lipid IV(A) from (3R)-3-hydroxytetradecanoyl-[acyl-carrier-protein] and UDP-N-acetyl-alpha-D-glucosamine: step 1/6. Involved in the biosynthesis of lipid A, a phosphorylated glycolipid that anchors the lipopolysaccharide to the outer membrane of the cell. The chain is Acyl-[acyl-carrier-protein]--UDP-N-acetylglucosamine O-acyltransferase from Bartonella bacilliformis (strain ATCC 35685 / KC583 / Herrer 020/F12,63).